The sequence spans 266 residues: Glutamate racemase (266 aa).

Residues 9–10 (DS) and 41–42 (YG) each bind substrate. Cysteine 73 (proton donor/acceptor) is an active-site residue. 74 to 75 (NT) lines the substrate pocket. Cysteine 183 functions as the Proton donor/acceptor in the catalytic mechanism. Residue 184 to 185 (TH) coordinates substrate.

This sequence belongs to the aspartate/glutamate racemases family.

It catalyses the reaction L-glutamate = D-glutamate. Its pathway is cell wall biogenesis; peptidoglycan biosynthesis. Functionally, provides the (R)-glutamate required for cell wall biosynthesis. This is Glutamate racemase from Shewanella woodyi (strain ATCC 51908 / MS32).